Reading from the N-terminus, the 312-residue chain is Olfactory receptor 2L8 (312 aa).

Residues 1 to 24 lie on the Extracellular side of the membrane; it reads MENYNQTSTDFILLGLFPPSRIDL. Residue Asn-5 is glycosylated (N-linked (GlcNAc...) asparagine). Residues 25-48 form a helical membrane-spanning segment; the sequence is FFFILIVFIFLMALIGNLSMILLI. At 49–56 the chain is on the cytoplasmic side; the sequence is FLDTHLHT. Residues 57 to 78 form a helical membrane-spanning segment; sequence PMYFLLSQLSLIDLNYISTIVP. At 79 to 99 the chain is on the extracellular side; the sequence is KMASDFLHGNKSISFTGCGIQ. Asn-88 carries N-linked (GlcNAc...) asparagine glycosylation. Residues Cys-96 and Cys-188 are joined by a disulfide bond. The helical transmembrane segment at 100-119 threads the bilayer; sequence SFFFLALGGAEALLLASMAY. Residues 120–138 are Cytoplasmic-facing; sequence DRYIAICFPLHYLIRMSKR. The chain crosses the membrane as a helical span at residues 139-157; sequence VCVLMITGSWIIGSINACA. The Extracellular segment spans residues 158–194; sequence HTVYVLHIPYCRSRAINHFFCDVPAMVTLACMDTWVY. Residues 195–218 traverse the membrane as a helical segment; the sequence is EGTVFLSATIFLVFPFIGISCSYG. The Cytoplasmic segment spans residues 219 to 235; that stretch reads QVLFAVYHMKSAEGRKK. The helical transmembrane segment at 236–258 threads the bilayer; that stretch reads AYLTCSTHLTVVTFYYAPFVYTY. Residues 259 to 271 lie on the Extracellular side of the membrane; the sequence is LRPRSLRSPTEDK. Residues 272–291 form a helical membrane-spanning segment; the sequence is VLAVFYTILTPMLNPIIYSL. The Cytoplasmic portion of the chain corresponds to 292 to 312; it reads RNKEVMGALTRVSQRICSVKM.

This sequence belongs to the G-protein coupled receptor 1 family.

The protein resides in the cell membrane. Odorant receptor. In Homo sapiens (Human), this protein is Olfactory receptor 2L8 (OR2L8).